We begin with the raw amino-acid sequence, 119 residues long: DNA-binding protein Maeo_0998 (119 aa).

The segment covering 1 to 11 (MDIEEIKRQKM) has biased composition (basic and acidic residues). The tract at residues 1–36 (MDIEEIKRQKMMELQQQQAQGAPNPEEIQQQQEQER) is disordered. Positions 15 to 32 (QQQQAQGAPNPEEIQQQQ) are enriched in low complexity.

Belongs to the PDCD5 family.

In Methanococcus aeolicus (strain ATCC BAA-1280 / DSM 17508 / OCM 812 / Nankai-3), this protein is DNA-binding protein Maeo_0998.